We begin with the raw amino-acid sequence, 214 residues long: ATP phosphoribosyltransferase (214 aa).

This sequence belongs to the ATP phosphoribosyltransferase family. Short subfamily. In terms of assembly, heteromultimer composed of HisG and HisZ subunits.

The protein resides in the cytoplasm. It carries out the reaction 1-(5-phospho-beta-D-ribosyl)-ATP + diphosphate = 5-phospho-alpha-D-ribose 1-diphosphate + ATP. Its pathway is amino-acid biosynthesis; L-histidine biosynthesis; L-histidine from 5-phospho-alpha-D-ribose 1-diphosphate: step 1/9. Catalyzes the condensation of ATP and 5-phosphoribose 1-diphosphate to form N'-(5'-phosphoribosyl)-ATP (PR-ATP). Has a crucial role in the pathway because the rate of histidine biosynthesis seems to be controlled primarily by regulation of HisG enzymatic activity. The sequence is that of ATP phosphoribosyltransferase from Deinococcus deserti (strain DSM 17065 / CIP 109153 / LMG 22923 / VCD115).